The sequence spans 612 residues: uncharacterized protein (612 aa).

Transmembrane regions (helical) follow at residues 13–33, 38–58, 67–87, 107–127, 144–164, and 189–209; these read IPLT…EWLP, AILV…EGIA, TIMA…IQII, GFIV…AIFL, LLIP…LGTS, and LGLL…PILL. RCK C-terminal domains are found at residues 218-302 and 316-403; these read GNVA…ERGI and NNAG…LLVL. 6 consecutive transmembrane segments (helical) span residues 419–439, 459–479, 501–521, 525–545, 546–566, and 586–606; these read AIAI…PISV, IYGA…PLGT, LSGY…TEIL, ATVV…GLNP, LAFM…PIGY, and IGAP…MLIY.

Belongs to the SLC13A/DASS transporter (TC 2.A.47) family. NADC subfamily.

The protein resides in the cell membrane. This is an uncharacterized protein from Synechocystis sp. (strain ATCC 27184 / PCC 6803 / Kazusa).